Reading from the N-terminus, the 259-residue chain is UPF0246 protein Pmen_1032 (259 aa).

It belongs to the UPF0246 family.

The chain is UPF0246 protein Pmen_1032 from Ectopseudomonas mendocina (strain ymp) (Pseudomonas mendocina).